The following is a 284-amino-acid chain: Tropomyosin alpha-3 chain (284 aa).

Met1 is modified (N-acetylmethionine). The disordered stretch occupies residues 1–43 (MEAIKKKMQMLKLDKENALDRAEQAEAEQKQAEERSKQLEDEL). Residues 1 to 284 (MEAIKKKMQM…DHALNDMTSI (284 aa)) adopt a coiled-coil conformation. An N-acetylalanine modification is found at Glu2. Over residues 12–40 (KLDKENALDRAEQAEAEQKQAEERSKQLE) the composition is skewed to basic and acidic residues. At Thr53 the chain carries Phosphothreonine. Phosphoserine occurs at positions 61 and 87. Thr108 is modified (phosphothreonine). Phosphoserine is present on residues Ser206 and Ser215. Residue Leu228 is modified to N6-acetyllysine. Residue Thr252 is modified to Phosphothreonine. Residue Tyr261 is modified to Phosphotyrosine. Ser271 is subject to Phosphoserine. Thr282 bears the Phosphothreonine mark. Ser283 carries the phosphoserine modification.

This sequence belongs to the tropomyosin family. In terms of assembly, homodimer. Heterodimer of an alpha (TPM1, TPM3 or TPM4) and a beta (TPM2) chain. Interacts with TMOD1. Interacts with TNNT1.

Its subcellular location is the cytoplasm. The protein localises to the cytoskeleton. Its function is as follows. Binds to actin filaments in muscle and non-muscle cells. Plays a central role, in association with the troponin complex, in the calcium dependent regulation of vertebrate striated muscle contraction. Smooth muscle contraction is regulated by interaction with caldesmon. In non-muscle cells is implicated in stabilizing cytoskeleton actin filaments. This is Tropomyosin alpha-3 chain (TPM3) from Bos taurus (Bovine).